A 248-amino-acid polypeptide reads, in one-letter code: Transcription termination/antitermination protein NusG (248 aa).

Residues 197–227 (KGDQVRVIEGPFMNFTGTVEEVHPEKRKLTV) form the KOW domain.

Belongs to the NusG family. In terms of assembly, monomer. Homodimer.

Participates in transcription elongation, termination and antitermination. The sequence is that of Transcription termination/antitermination protein NusG from Aquifex aeolicus (strain VF5).